Reading from the N-terminus, the 355-residue chain is Blue-sensitive opsin (355 aa).

Over 1–36 (MNGTEGINFYVPLSNKTGLVRSPFEYPQYYLAEPWK) the chain is Extracellular. Asn-2 and Asn-15 each carry an N-linked (GlcNAc...) asparagine glycan. A helical membrane pass occupies residues 37–61 (YKVVCCYIFFLIFTGLPINILTLLV). Topologically, residues 62–73 (TFKHKKLRQPLN) are cytoplasmic. Residues 74-98 (YILVNLAVADLFMACFGFTVTFYTA) form a helical membrane-spanning segment. Over 99–113 (WNGYFIFGPIGCAIE) the chain is Extracellular. Cys-110 and Cys-187 form a disulfide bridge. The chain crosses the membrane as a helical span at residues 114-133 (GFFATLGGQVALWSLVVLAI). The Cytoplasmic segment spans residues 134-152 (ERYIVVCKPMGNFRFSATH). The helical transmembrane segment at 153–176 (ALMGISFTWFMSFSCAAPPLLGWS) threads the bilayer. At 177–202 (RYIPEGMQCSCGPDYYTLNPDYHNES) the chain is on the extracellular side. N-linked (GlcNAc...) asparagine glycosylation occurs at Asn-200. Residues 203 to 230 (YVLYMFGVHFVIPVVVIFFSYGRLICKV) traverse the membrane as a helical segment. The Cytoplasmic segment spans residues 231–252 (REAAAQQQESASTQKAEREVTR). Residues 253-276 (MVILMVLGFLLAWTPYAMVAFWIF) traverse the membrane as a helical segment. Over 277-284 (TNKGVDFS) the chain is Extracellular. Residues 285–309 (ATLMSVPAFFSKSSSLYNPIIYVLM) form a helical membrane-spanning segment. Lys-296 carries the N6-(retinylidene)lysine modification. Residues 310 to 355 (NKQFRNCMITTICCGKNPFGDEDVSSSVSQSKTEVSSVSSSQVSPA) are Cytoplasmic-facing. 2 S-palmitoyl cysteine lipidation sites follow: Cys-322 and Cys-323. The disordered stretch occupies residues 332 to 355 (DVSSSVSQSKTEVSSVSSSQVSPA). The segment covering 334–355 (SSSVSQSKTEVSSVSSSQVSPA) has biased composition (low complexity).

Belongs to the G-protein coupled receptor 1 family. Opsin subfamily. In terms of processing, phosphorylated on some or all of the serine and threonine residues present in the C-terminal region.

The protein localises to the membrane. Its function is as follows. Visual pigments are the light-absorbing molecules that mediate vision. They consist of an apoprotein, opsin, covalently linked to cis-retinal. This opsin uses a vitamin A2 chromophore. This chain is Blue-sensitive opsin, found in Anolis carolinensis (Green anole).